Here is a 54-residue protein sequence, read N- to C-terminus: Chymosin (54 aa).

Positions 1 to 27 (SEITRVPLHKGKSLRKALKEHGLLEBF) are cleaved as a propeptide — activation peptide.

This sequence belongs to the peptidase A1 family. In terms of assembly, monomer.

It catalyses the reaction Broad specificity similar to that of pepsin A. Clots milk by cleavage of a single 104-Ser-Phe-|-Met-Ala-107 bond in kappa-chain of casein.. In terms of biological role, chymosin is synthesized in the mucosa of the stomach. The enzyme hydrolyzes casein to paracasein. The sequence is that of Chymosin (CYM) from Felis catus (Cat).